The sequence spans 214 residues: Insulin-like growth factor 2 (214 aa).

Positions Glu48–Thr79 are b. 3 disulfide bridges follow: Cys56/Cys97, Cys68/Cys110, and Cys96/Cys101. The interval Ser80–Arg90 is c. Residues Gly91–Ala111 form an a region. The tract at residues Lys112–Glu117 is d. The propeptide at Arg118–Asn214 is e peptide.

This sequence belongs to the insulin family.

Its subcellular location is the secreted. The insulin-like growth factors, isolated from plasma, are structurally and functionally related to insulin but have a much higher growth-promoting activity. Acts as a ligand for integrin which is required for IGF2 signaling. This Oncorhynchus mykiss (Rainbow trout) protein is Insulin-like growth factor 2.